The primary structure comprises 66 residues: UPF0434 protein Nwi_0075 (66 aa).

Belongs to the UPF0434 family.

The protein is UPF0434 protein Nwi_0075 of Nitrobacter winogradskyi (strain ATCC 25391 / DSM 10237 / CIP 104748 / NCIMB 11846 / Nb-255).